We begin with the raw amino-acid sequence, 156 residues long: Superoxide dismutase [Cu-Zn] 2 (156 aa).

His-47, His-49, and His-64 together coordinate Cu cation. A disulfide bridge links Cys-58 with Cys-147. 4 residues coordinate Zn(2+): His-64, His-72, His-81, and Asp-84. His-121 provides a ligand contact to Cu cation.

This sequence belongs to the Cu-Zn superoxide dismutase family. As to quaternary structure, homodimer. Requires Cu cation as cofactor. Zn(2+) is required as a cofactor.

Its subcellular location is the cytoplasm. It carries out the reaction 2 superoxide + 2 H(+) = H2O2 + O2. In terms of biological role, destroys radicals which are normally produced within the cells and which are toxic to biological systems. This Mesembryanthemum crystallinum (Common ice plant) protein is Superoxide dismutase [Cu-Zn] 2 (SODCC.2).